The sequence spans 227 residues: 2,3-bisphosphoglycerate-dependent phosphoglycerate mutase (227 aa).

Substrate is bound by residues 7–14 (RHGQSEWN), 20–21 (TG), R59, 86–89 (ERHY), K97, 113–114 (RR), and 182–183 (GN). The active-site Tele-phosphohistidine intermediate is H8. E86 (proton donor/acceptor) is an active-site residue.

This sequence belongs to the phosphoglycerate mutase family. BPG-dependent PGAM subfamily. Homodimer.

The enzyme catalyses (2R)-2-phosphoglycerate = (2R)-3-phosphoglycerate. Its pathway is carbohydrate degradation; glycolysis; pyruvate from D-glyceraldehyde 3-phosphate: step 3/5. Catalyzes the interconversion of 2-phosphoglycerate and 3-phosphoglycerate. The polypeptide is 2,3-bisphosphoglycerate-dependent phosphoglycerate mutase (Neisseria gonorrhoeae (strain ATCC 700825 / FA 1090)).